Here is a 110-residue protein sequence, read N- to C-terminus: Ribonuclease P protein component 4 (110 aa).

Residues Cys65, Cys68, Cys94, and Cys97 each contribute to the Zn(2+) site.

This sequence belongs to the eukaryotic/archaeal RNase P protein component 4 family. Consists of a catalytic RNA component and at least 4-5 protein subunits. The cofactor is Zn(2+).

It is found in the cytoplasm. It catalyses the reaction Endonucleolytic cleavage of RNA, removing 5'-extranucleotides from tRNA precursor.. Its function is as follows. Part of ribonuclease P, a protein complex that generates mature tRNA molecules by cleaving their 5'-ends. The protein is Ribonuclease P protein component 4 of Methanococcus maripaludis (strain C5 / ATCC BAA-1333).